Here is a 213-residue protein sequence, read N- to C-terminus: Orotate phosphoribosyltransferase (213 aa).

Position 26 (Lys26) interacts with 5-phospho-alpha-D-ribose 1-diphosphate. 34 to 35 (FF) serves as a coordination point for orotate. Residues 72-73 (YK), Arg99, Lys100, Lys103, His105, and 124-132 (DDVITAGTA) each bind 5-phospho-alpha-D-ribose 1-diphosphate. Thr128 and Arg156 together coordinate orotate.

Belongs to the purine/pyrimidine phosphoribosyltransferase family. PyrE subfamily. Homodimer. Mg(2+) is required as a cofactor.

It catalyses the reaction orotidine 5'-phosphate + diphosphate = orotate + 5-phospho-alpha-D-ribose 1-diphosphate. It functions in the pathway pyrimidine metabolism; UMP biosynthesis via de novo pathway; UMP from orotate: step 1/2. Its function is as follows. Catalyzes the transfer of a ribosyl phosphate group from 5-phosphoribose 1-diphosphate to orotate, leading to the formation of orotidine monophosphate (OMP). The chain is Orotate phosphoribosyltransferase from Pseudomonas savastanoi pv. phaseolicola (strain 1448A / Race 6) (Pseudomonas syringae pv. phaseolicola (strain 1448A / Race 6)).